The following is a 348-amino-acid chain: Phospho-2-dehydro-3-deoxyheptonate aldolase, Trp-sensitive (348 aa).

The protein belongs to the class-I DAHP synthase family.

The enzyme catalyses D-erythrose 4-phosphate + phosphoenolpyruvate + H2O = 7-phospho-2-dehydro-3-deoxy-D-arabino-heptonate + phosphate. Its pathway is metabolic intermediate biosynthesis; chorismate biosynthesis; chorismate from D-erythrose 4-phosphate and phosphoenolpyruvate: step 1/7. Its function is as follows. Stereospecific condensation of phosphoenolpyruvate (PEP) and D-erythrose-4-phosphate (E4P) giving rise to 3-deoxy-D-arabino-heptulosonate-7-phosphate (DAHP). In Buchnera aphidicola subsp. Schizaphis graminum (strain Sg), this protein is Phospho-2-dehydro-3-deoxyheptonate aldolase, Trp-sensitive (aroH).